We begin with the raw amino-acid sequence, 92 residues long: DNA-binding protein HU 1 (92 aa).

At Thr4 the chain carries Phosphothreonine.

This sequence belongs to the bacterial histone-like protein family. Homodimer. In terms of assembly, (Microbial infection) Interacts with Bacillus phage SP01 Gp46; the interaction replaces dsDNA from the hbs-DNA complex.

The protein resides in the cytoplasm. It localises to the nucleoid. Its function is as follows. Histone-like DNA-binding protein which introduces negative supercoils in relaxed plasmid DNA in the presence of topoisomerase I. There are at least 20,000 monomers/cell. Capable of wrapping DNA to stabilize it, and thus to prevent its denaturation under extreme environmental conditions. Binds evenly across chromosome, does not display a preference for AT content. Binds ss- and dsDNA in a sequence non-specific manner; 8 nucleotides are sufficient to bind protein. The sequence is that of DNA-binding protein HU 1 from Bacillus subtilis (strain 168).